The following is a 310-amino-acid chain: Tagatose-6-phosphate kinase (310 aa).

Belongs to the carbohydrate kinase PfkB family. LacC subfamily.

It catalyses the reaction D-tagatofuranose 6-phosphate + ATP = D-tagatofuranose 1,6-bisphosphate + ADP + H(+). It functions in the pathway carbohydrate metabolism; D-tagatose 6-phosphate degradation; D-glyceraldehyde 3-phosphate and glycerone phosphate from D-tagatose 6-phosphate: step 1/2. This Streptococcus agalactiae serotype Ia (strain ATCC 27591 / A909 / CDC SS700) protein is Tagatose-6-phosphate kinase.